Consider the following 567-residue polypeptide: uncharacterized protein (567 aa).

Residues 1–26 (MPSEKATTRHLPGAVETLSPRTGRRP) form a disordered region. Helical transmembrane passes span 57–77 (AILVTNVIGLIVGAMLLTVAF), 90–110 (VSFGIVPGYCVLAFILGTYWL), 142–162 (VALAVLFLWGAAAALWTIIYG), 173–193 (LFSMGVIGVVAATSCYLLTEF), 221–241 (MLVWLLCSGVPNVGVALTAIF), and 257–277 (VLILWAPLLIFGFILMWILAW). The 53-residue stretch at 277-329 (WLTATPVRVVREALNRVEQGDLSGDLVVFDGTELGELQRGFNRMVEGLRERER) folds into the HAMP domain. Residues 361–485 (AVVFVDIVGS…EPVNEAARLC (125 aa)) enclose the Guanylate cyclase domain.

It belongs to the adenylyl cyclase class-3 family.

It localises to the cell membrane. This is an uncharacterized protein from Mycobacterium bovis (strain ATCC BAA-935 / AF2122/97).